The sequence spans 380 residues: MASSNGLSLQEIADLVGGQLLDFSDCINDETNSSDGAVQGKSPSVEISSTICTGAAPPAEAGPQQITLIDQANHAGQLADSQAFAVIAPEYVAASPIRLQILVDDPHAAFTKLVSHYRPALGETMPVSGIDPTAKVDPTCQVHPSANIGANVEIGPGCTIAPGVNIGAGCQIGADCTLHPNVTLYAYCQLGERVTLHAGTVVGAHGFGYKMVDGRHIPTAQLGYVVIENDVEVGASSTIDRGTYGATRIGEGTKIDNQVMIAHNCQIGRHNLLCSQVGIAGSCTTGDYVVLAGQVGLKDHIALADGVIVGAQAGVMDDLAPNQVYLGSPATPQRDQMQIMAVQRKLPEMRRELKRLTQRIGRLSEALEEQSADIDQRKAA.

Catalysis depends on histidine 263, which acts as the Proton acceptor.

This sequence belongs to the transferase hexapeptide repeat family. LpxD subfamily. Homotrimer.

It catalyses the reaction a UDP-3-O-[(3R)-3-hydroxyacyl]-alpha-D-glucosamine + a (3R)-hydroxyacyl-[ACP] = a UDP-2-N,3-O-bis[(3R)-3-hydroxyacyl]-alpha-D-glucosamine + holo-[ACP] + H(+). It participates in bacterial outer membrane biogenesis; LPS lipid A biosynthesis. Functionally, catalyzes the N-acylation of UDP-3-O-acylglucosamine using 3-hydroxyacyl-ACP as the acyl donor. Is involved in the biosynthesis of lipid A, a phosphorylated glycolipid that anchors the lipopolysaccharide to the outer membrane of the cell. This Rhodopirellula baltica (strain DSM 10527 / NCIMB 13988 / SH1) protein is UDP-3-O-acylglucosamine N-acyltransferase.